The chain runs to 294 residues: HTH-type transcriptional regulator XapR (294 aa).

One can recognise an HTH lysR-type domain in the interval 7-64; it reads TDLKLLRYFLAVAEELHFGRAAARLNMSQPPLSIHIKELENQLGTQLFIRHSRSVVLT. The segment at residues 24 to 43 is a DNA-binding region (H-T-H motif); that stretch reads FGRAAARLNMSQPPLSIHIK.

The protein belongs to the LysR transcriptional regulatory family.

Positive regulator required for the expression of xapA and xapB. Binds to the inducer xanthosine. This Escherichia coli (strain K12) protein is HTH-type transcriptional regulator XapR (xapR).